The sequence spans 679 residues: Single-strand DNA endonuclease ASTE1 (679 aa).

An interaction with SHLD2 region spans residues 351–400 (TILPTQVENMQQPNAHRISQPIRQIIYGLLLNASPHLDKTSWNALPPQPL). Positions 625–645 (RSNSKKKRQKKQNTSCSKNRG) are disordered. Positions 626–635 (SNSKKKRQKK) are enriched in basic residues.

It belongs to the asteroid family. As to quaternary structure, interacts with SHLD1, SHLD2, SHLD3, RIF1 and MAD2L2/REV7.

Structure-specific DNA endonuclease that specifically cleaves single-stranded DNA and 3' overhang DNA. Contributes to the control of DNA double-strand break repair choice by antagonizing BRCA1-dependent homologous recombination (HR) and promoting non-homologous end-joining (NHEJ). Recruited to the single-stranded DNA ends by SHLD2 and cleaves the 3' exposed DNA ends, therefore inhibiting DNA end resection (necessary for HR) and promoting DNA end protection (necessary for NHEJ). This is Single-strand DNA endonuclease ASTE1 (ASTE1) from Homo sapiens (Human).